The sequence spans 321 residues: GDP-L-fucose synthase (321 aa).

Residues 10-16 (GHRGMVG), 36-41 (RDELNL), and 105-108 (LGSS) contribute to the NADP(+) site. Catalysis depends on Y136, which acts as the Proton donor/acceptor. NADP(+) is bound by residues K140, 163-166 (PTNL), and H179. The substrate site is built by R187, W202, R209, and D278.

The protein belongs to the NAD(P)-dependent epimerase/dehydratase family. Fucose synthase subfamily. In terms of assembly, homodimer.

The protein resides in the cytoplasm. It carries out the reaction GDP-beta-L-fucose + NADP(+) = GDP-4-dehydro-alpha-D-rhamnose + NADPH + H(+). The protein operates within nucleotide-sugar biosynthesis; GDP-L-fucose biosynthesis via de novo pathway; GDP-L-fucose from GDP-alpha-D-mannose: step 2/2. It participates in exopolysaccharide biosynthesis; colanic acid biosynthesis. Its activity is regulated as follows. Subject to product inhibition by NADP and GDP-fucose. Catalyzes the two-step NADP-dependent conversion of GDP-4-dehydro-6-deoxy-D-mannose to GDP-fucose, involving an epimerase and a reductase reaction. The protein is GDP-L-fucose synthase of Escherichia coli (strain K12).